A 226-amino-acid chain; its full sequence is TPD1 protein homolog 1A (226 aa).

Positions 1 to 35 (MRVSSASSTPPPPAFAAAAWAVVLLAMLRSDVALA) are cleaved as a signal peptide.

As to quaternary structure, interacts with MSP1. In terms of tissue distribution, expressed in roots, and anthers and ovules during meiosis.

In terms of biological role, involved in cell specification during anther development. Required for the differentiation of primary parietal cells into secondary parietal cells in anthers. May serve as an extracellular ligand for the MSP1 receptor kinase to limit sporocyte number in ovules. The chain is TPD1 protein homolog 1A from Oryza sativa subsp. japonica (Rice).